The chain runs to 552 residues: FACT complex subunit POB3 (552 aa).

Residues 190 to 205 show a composition bias toward basic and acidic residues; sequence KKEESSNEVVPKKEDG. Disordered stretches follow at residues 190–209 and 484–552; these read KKEE…AEGE and QTAL…PKVE. Residues 490-529 show a composition bias toward acidic residues; that stretch reads DSDEEDINMGSAGEDDESVDEDFQVSSDNDADEVAEEFDS. Residues 541–552 are compositionally biased toward basic and acidic residues; sequence DEERPSKKPKVE.

The protein belongs to the SSRP1 family. As to quaternary structure, forms a stable heterodimer with SPT16. The SPT16-POB3 dimer weakly associates with multiple molecules of NHP6 (NHP6A or NHP6B) to form the FACT (yFACT or SNP) complex. The FACT complex interacts with the CK2 (casein kinase II) complex subunits CKA1, CKA2, CKB1 and CKB2 and the components of the transcription machinery CHD1, CTR9, PAF1 and CDC73. The FACT complex interacts with the PAF1 complex. SPT16 interacts with SAS3 and POL1. Interacts directly with RFA1.

The protein resides in the nucleus. It is found in the chromosome. In terms of biological role, component of the FACT complex, a general chromatin factor that acts to reorganize nucleosomes. The FACT complex is involved in multiple processes that require DNA as a template such as mRNA elongation, DNA replication and DNA repair. During transcription elongation the FACT complex acts as a histone chaperone that both destabilizes and restores nucleosomal structure. It facilitates the passage of RNA polymerase II and transcription by promoting the dissociation of one histone H2A-H2B dimer from the nucleosome, then subsequently promotes the reestablishment of the nucleosome following the passage of RNA polymerase II. Transcription elongation is promoted by the repression of transcription initiation from cryptic sites. Also acts in establishing transcription initiation complexes and promotes SPT15/TBP-binding to a TATA box. Together with replication factor-A protein (RPA), FACT may play a role in nucleosome deposition during DNA replication. The sequence is that of FACT complex subunit POB3 (POB3) from Saccharomyces cerevisiae (strain ATCC 204508 / S288c) (Baker's yeast).